A 625-amino-acid chain; its full sequence is MKYSAGDFDVVVIGAGHAGCEAALASARMGCKTLICTMNLDSIALMACNPNIGGTAKGHLVREIDALGGEMGINIDHTFIQSRMLNTSKGPAVHSLRAQADKKRYSERMKHLLEKEDNVVLRQLEVIEIDVEDNEVKGVLTKNGAYFTTKAIILCTGTYLKGKIIIGDIIYSSGPSGLYPANDLSQSLLDLGINLRRFKTGTPARINKRSVDFSKMIEQPGDEKIVPFSFIHNKLDKDQISCYLTYTSEETHKIIHENIHRSPLYNGSIEGVGPRYCPSIEDKIVRFPDKDKHQIFIEPEGENTEELYVGGMSSSLPEDVQIKMYRSVPGLENAEILRTAYAIEYDCIDPQQLDLTLEFKNINGLYGAGQFNGSSGYEEAAAQGLIAGINAVLKIKEKNPLILKRSDAYIGVLIDDLVTKGTNEPYRMMTSRAEYRLLLRQDNADLRLTELGYKVGLVKEDRYNKFLNRKKNVENEIERLRNMQITGKREINEFLLEKGSTELKKPISLYELIKRPELDYFKVESLDDKRPSLSDDEKEEINIIAKYEGYINKQLEQVEQFKKYEDRLIPKSINYLDIKGLRLEAIQKLEKIKPINIGQASRISGVSPADISVLLIYMERKNREN.

14–19 (GAGHAG) lines the FAD pocket. 273-287 (GPRYCPSIEDKIVRF) serves as a coordination point for NAD(+).

This sequence belongs to the MnmG family. In terms of assembly, homodimer. Heterotetramer of two MnmE and two MnmG subunits. FAD serves as cofactor.

The protein resides in the cytoplasm. NAD-binding protein involved in the addition of a carboxymethylaminomethyl (cmnm) group at the wobble position (U34) of certain tRNAs, forming tRNA-cmnm(5)s(2)U34. The chain is tRNA uridine 5-carboxymethylaminomethyl modification enzyme MnmG from Clostridium botulinum (strain Hall / ATCC 3502 / NCTC 13319 / Type A).